Here is a 115-residue protein sequence, read N- to C-terminus: UPF0235 protein CTA_0423 (115 aa).

Belongs to the UPF0235 family.

The polypeptide is UPF0235 protein CTA_0423 (Chlamydia trachomatis serovar A (strain ATCC VR-571B / DSM 19440 / HAR-13)).